The following is a 50-amino-acid chain: Inducible serine protease inhibitor 1 (50 aa).

A disordered region spans residues 1–27 (DLVXGTNFXKNNPXSTRVAANSXRSPS). Residues 8 to 25 (FXKNNPXSTRVAANSXRS) show a composition bias toward polar residues.

Its function is as follows. Inhibits trypsin and the toxin protease PR2 of M.anisopliae. Does not inhibit chymotrypsin, subtilisin Carlsberg, proteinase K, porcine pancreatic elastase and the toxin protease PR1 of M.anisopliae. The sequence is that of Inducible serine protease inhibitor 1 from Galleria mellonella (Greater wax moth).